We begin with the raw amino-acid sequence, 363 residues long: Serpentine receptor class beta-18 (363 aa).

7 consecutive transmembrane segments (helical) span residues 52-72 (LAQF…VVYI), 92-112 (MLLF…YHII), 135-155 (FRYT…CIYI), 172-192 (LILA…IIWV), 218-238 (KATI…IGLF), 276-296 (AALM…YNFL), and 303-323 (TIAT…LVIV).

The protein belongs to the nematode receptor-like protein srb family.

The protein resides in the membrane. The sequence is that of Serpentine receptor class beta-18 (srb-18) from Caenorhabditis elegans.